A 435-amino-acid chain; its full sequence is Methylenetetrahydrofolate--tRNA-(uracil-5-)-methyltransferase TrmFO (435 aa).

9–14 is an FAD binding site; it reads GAGLAG.

Belongs to the MnmG family. TrmFO subfamily. Requires FAD as cofactor.

It localises to the cytoplasm. The enzyme catalyses uridine(54) in tRNA + (6R)-5,10-methylene-5,6,7,8-tetrahydrofolate + NADH + H(+) = 5-methyluridine(54) in tRNA + (6S)-5,6,7,8-tetrahydrofolate + NAD(+). The catalysed reaction is uridine(54) in tRNA + (6R)-5,10-methylene-5,6,7,8-tetrahydrofolate + NADPH + H(+) = 5-methyluridine(54) in tRNA + (6S)-5,6,7,8-tetrahydrofolate + NADP(+). Catalyzes the folate-dependent formation of 5-methyl-uridine at position 54 (M-5-U54) in all tRNAs. The chain is Methylenetetrahydrofolate--tRNA-(uracil-5-)-methyltransferase TrmFO from Staphylococcus aureus (strain JH1).